A 378-amino-acid polypeptide reads, in one-letter code: Putative glutamate--cysteine ligase 2 (378 aa).

It belongs to the glutamate--cysteine ligase type 2 family. YbdK subfamily.

It carries out the reaction L-cysteine + L-glutamate + ATP = gamma-L-glutamyl-L-cysteine + ADP + phosphate + H(+). In terms of biological role, ATP-dependent carboxylate-amine ligase which exhibits weak glutamate--cysteine ligase activity. The sequence is that of Putative glutamate--cysteine ligase 2 from Jannaschia sp. (strain CCS1).